We begin with the raw amino-acid sequence, 503 residues long: NAD-dependent protein deacetylase HST1 (503 aa).

The Deacetylase sirtuin-type domain maps to 183–468 (RLPNFNTIDH…SLVAKKCHWD (286 aa)). NAD(+)-binding positions include 208-227 (GAGV…EGFY) and 290-293 (QNID). Residue His310 is the Proton acceptor of the active site. 4 residues coordinate Zn(2+): Cys318, Cys321, Cys342, and Cys345. Residues 412–414 (GTS), 437–439 (NRD), and Cys454 each bind NAD(+).

This sequence belongs to the sirtuin family. Class I subfamily. Identified in the Set3C complex with HOS2, SIF2, SNT1, CPR1, HOS4/YIL112W and SET3. Its presence is however not essential for meiotic repression by the Set3C complex. Interacts with SUM1 and RFM1. The interaction with SUM1 is mediated by RFM1. It depends on Zn(2+) as a cofactor.

The protein resides in the nucleus. The enzyme catalyses N(6)-acetyl-L-lysyl-[protein] + NAD(+) + H2O = 2''-O-acetyl-ADP-D-ribose + nicotinamide + L-lysyl-[protein]. Functionally, NAD-dependent histone deacetylase involved in telomeric silencing. Histone deacetylase proteins act via the formation of large multiprotein complexes that are responsible for the deacetylation of lysine residues on the N-terminal part of the core histones (H2A, H2B, H3 and H4). Histone deacetylation gives a tag for epigenetic repression and plays an important role in transcriptional regulation, cell cycle progression and developmental events. Restores silencing at HMR in SIR2 mutants when overexpressed. Required to repress middle sporulation genes during vegetative growth. Acts as a sensor of NAD(+) levels and regulator of NAD(+) biosynthesis. Regulates the gene expression of de novo NAD(+) biosynthesis genes. This Saccharomyces cerevisiae (strain ATCC 204508 / S288c) (Baker's yeast) protein is NAD-dependent protein deacetylase HST1 (HST1).